A 231-amino-acid chain; its full sequence is tRNA (guanine-N(1)-)-methyltransferase (231 aa).

S-adenosyl-L-methionine contacts are provided by residues G112 and 132–137; that span reads IGDYIL.

Belongs to the RNA methyltransferase TrmD family. Homodimer.

The protein localises to the cytoplasm. The catalysed reaction is guanosine(37) in tRNA + S-adenosyl-L-methionine = N(1)-methylguanosine(37) in tRNA + S-adenosyl-L-homocysteine + H(+). In terms of biological role, specifically methylates guanosine-37 in various tRNAs. In Sulfurimonas denitrificans (strain ATCC 33889 / DSM 1251) (Thiomicrospira denitrificans (strain ATCC 33889 / DSM 1251)), this protein is tRNA (guanine-N(1)-)-methyltransferase.